Here is a 235-residue protein sequence, read N- to C-terminus: Probable transglycosylase IsaA (235 aa).

Positions 1-28 (MKKTVIASTLAVSLGIAGYGLSGHEAHA) are cleaved as a signal peptide. Polar residues predominate over residues 95-115 (ESSSNQEVSANTQSSNTNVQA). Residues 95-150 (ESSSNQEVSANTQSSNTNVQAVSAPTSSESRSYSTSTTSYSAPSHNYSSHSSSVRL) form a disordered region. The segment covering 117–147 (SAPTSSESRSYSTSTTSYSAPSHNYSSHSSS) has biased composition (low complexity).

This sequence belongs to the transglycosylase family. IsaA subfamily.

It localises to the secreted. Is able to cleave peptidoglycan. The chain is Probable transglycosylase IsaA (isaA) from Staphylococcus epidermidis (strain ATCC 35984 / DSM 28319 / BCRC 17069 / CCUG 31568 / BM 3577 / RP62A).